A 913-amino-acid chain; its full sequence is DNA mismatch repair protein MutS (913 aa).

720–727 contacts ATP; the sequence is GPNASGKS.

This sequence belongs to the DNA mismatch repair MutS family.

Its function is as follows. This protein is involved in the repair of mismatches in DNA. It is possible that it carries out the mismatch recognition step. This protein has a weak ATPase activity. The sequence is that of DNA mismatch repair protein MutS from Prochlorococcus marinus (strain MIT 9312).